The sequence spans 210 residues: Glutathione S-transferase P (210 aa).

Positions 2–81 (PPYTVVYFPV…HLGRTLGLYG (80 aa)) constitute a GST N-terminal domain. A Phosphotyrosine; by EGFR modification is found at Tyr4. Glutathione is bound by residues Tyr8, Arg14, Trp39, Lys45, and 52-53 (QL). Thr62 bears the Phosphothreonine mark. 65 to 66 (QS) is a glutathione binding site. Residues 83–204 (DQQEAALVDM…ASPEYVNLPI (122 aa)) form the GST C-terminal domain. N6-succinyllysine is present on residues Lys103 and Lys116. N6-acetyllysine is present on Lys128. Tyr199 is subject to Phosphotyrosine; by EGFR.

This sequence belongs to the GST superfamily. Pi family. Homodimer. Interacts with CDK5.

It is found in the cytoplasm. It localises to the mitochondrion. The protein resides in the nucleus. It carries out the reaction RX + glutathione = an S-substituted glutathione + a halide anion + H(+). It catalyses the reaction prostaglandin J2 + glutathione = prostaglandin J2-S-(R)-glutathione. The enzyme catalyses prostaglandin J2 + glutathione = prostaglandin J2-S-(S)-glutathione. The catalysed reaction is prostaglandin A2 + glutathione = prostaglandin A2-S-(S)-glutathione. It carries out the reaction 11(S)-hydroxy-14(S),15(S)-epoxy-(5Z,8Z,12E)-eicosatrienoate + glutathione = (11S,15S)-dihydroxy-14(R)-S-glutathionyl-(5Z,8Z,12E)-eicosatrienoate. Conjugation of reduced glutathione to a wide number of exogenous and endogenous hydrophobic electrophiles. Involved in the formation of glutathione conjugates of both prostaglandin A2 (PGA2) and prostaglandin J2 (PGJ2). Participates in the formation of novel hepoxilin regioisomers. Negatively regulates CDK5 activity via p25/p35 translocation to prevent neurodegeneration. In Homo sapiens (Human), this protein is Glutathione S-transferase P.